The sequence spans 527 residues: Putative BTB/POZ domain-containing protein R225 (527 aa).

The region spanning 16-89 is the BTB domain; that stretch reads TDLELVLTDP…YGQTNRSTDY (74 aa).

It belongs to the mimivirus BTB/WD family.

This is Putative BTB/POZ domain-containing protein R225 from Acanthamoeba polyphaga (Amoeba).